The following is a 510-amino-acid chain: Cytochrome P450 monooxygenase BOT1 (510 aa).

A helical transmembrane segment spans residues 16-36 (PLAWAALILASFTLYSVQLVV). Residue C454 participates in heme binding. N476 carries N-linked (GlcNAc...) asparagine glycosylation.

This sequence belongs to the cytochrome P450 family. Heme is required as a cofactor.

It is found in the membrane. It participates in secondary metabolite biosynthesis. Its function is as follows. Cytochrome P450 monooxygenase; part of the gene cluster that mediates the biosynthesis of botrydial. Botrydial is necessary for colonization of plant tissue by the T4 strain. It is a strain-dependent virulence factor since highly aggressive strains like SAS56 or B05 still retain substantial virulence when botrydial synthesis is impaired, since they produce also botcinic acid. The first step of botrydial biosynthesis is performed by the sesquiterpene synthase BOT2 which catalyzes the cyclization of farnesyl diphosphate (FPP) to presilphiperfolan-8-beta-ol (PSP). The cytochrome P450 monooxygenase BOT4 then catalyzes the hydroxylation at C-4 to give a probotryane intermediate. Acetylation of the hydroxyl at C-4 is carried out by the acetyltransferase BOT5, followed by the combined action of the P450 monooxygenases BOT3 and BOT1, to yield finally the glycol, via the regio- and stereospecific hydroxylations at C-10 and C-15 of the probotryane intermediates, respectively. The cleavage of the C10-C15 bond of probotryane skeleton is an intriguing and chemically important reaction, which could be mediated by some of the monooxygenases or by a combination of them. It is possible that either BOT3 or BOT1 would oxidize either the 10- or the 15-hydroxy group to the hydroperoxide derivative, which would then undergo heterolytic fragmentation to give the dialdehyde botrydial. Finally, the dehydrogenase BOT7 might be involved in the conversion of botrydial to dihydrobotrydial. In Botryotinia fuckeliana (Noble rot fungus), this protein is Cytochrome P450 monooxygenase BOT1.